Here is a 384-residue protein sequence, read N- to C-terminus: S-adenosylmethionine synthase (384 aa).

Histidine 15 contacts ATP. Aspartate 17 is a binding site for Mg(2+). Residue glutamate 43 coordinates K(+). L-methionine contacts are provided by glutamate 56 and glutamine 99. The tract at residues 99-109 (QSSDINQGVDR) is flexible loop. Residues 164-166 (DAK), 230-231 (RF), aspartate 239, 245-246 (RK), alanine 262, and lysine 266 contribute to the ATP site. Aspartate 239 is an L-methionine binding site. Lysine 270 contacts L-methionine.

The protein belongs to the AdoMet synthase family. As to quaternary structure, homotetramer; dimer of dimers. Mg(2+) serves as cofactor. It depends on K(+) as a cofactor.

The protein resides in the cytoplasm. The enzyme catalyses L-methionine + ATP + H2O = S-adenosyl-L-methionine + phosphate + diphosphate. The protein operates within amino-acid biosynthesis; S-adenosyl-L-methionine biosynthesis; S-adenosyl-L-methionine from L-methionine: step 1/1. In terms of biological role, catalyzes the formation of S-adenosylmethionine (AdoMet) from methionine and ATP. The overall synthetic reaction is composed of two sequential steps, AdoMet formation and the subsequent tripolyphosphate hydrolysis which occurs prior to release of AdoMet from the enzyme. In Histophilus somni (strain 129Pt) (Haemophilus somnus), this protein is S-adenosylmethionine synthase.